Here is a 244-residue protein sequence, read N- to C-terminus: Glucosamine-6-phosphate deaminase (244 aa).

The active-site Proton acceptor; for enolization step is the Asp-67. Asn-136 acts as the For ring-opening step in catalysis. His-138 acts as the Proton acceptor; for ring-opening step in catalysis. The active-site For ring-opening step is the Glu-143.

The protein belongs to the glucosamine/galactosamine-6-phosphate isomerase family. NagB subfamily.

The catalysed reaction is alpha-D-glucosamine 6-phosphate + H2O = beta-D-fructose 6-phosphate + NH4(+). The protein operates within amino-sugar metabolism; N-acetylneuraminate degradation; D-fructose 6-phosphate from N-acetylneuraminate: step 5/5. Its function is as follows. Catalyzes the reversible isomerization-deamination of glucosamine 6-phosphate (GlcN6P) to form fructose 6-phosphate (Fru6P) and ammonium ion. The chain is Glucosamine-6-phosphate deaminase from Clostridium botulinum (strain Loch Maree / Type A3).